Consider the following 336-residue polypeptide: Ornithine carbamoyltransferase, catabolic (336 aa).

Carbamoyl phosphate-binding positions include 62–65 (STRT), glutamine 89, arginine 113, and 140–143 (HPTQ). L-ornithine is bound by residues asparagine 172, aspartate 236, and 240 to 241 (SM). Carbamoyl phosphate contacts are provided by residues 277–278 (CL) and arginine 322.

Belongs to the aspartate/ornithine carbamoyltransferase superfamily. OTCase family.

Its subcellular location is the cytoplasm. The catalysed reaction is carbamoyl phosphate + L-ornithine = L-citrulline + phosphate + H(+). The protein operates within amino-acid degradation; L-arginine degradation via ADI pathway; carbamoyl phosphate from L-arginine: step 2/2. Reversibly catalyzes the transfer of the carbamoyl group from carbamoyl phosphate (CP) to the N(epsilon) atom of ornithine (ORN) to produce L-citrulline. The protein is Ornithine carbamoyltransferase, catabolic (arcB) of Staphylococcus aureus (strain N315).